Here is a 102-residue protein sequence, read N- to C-terminus: Protein RnfH (102 aa).

It belongs to the UPF0125 (RnfH) family.

This is Protein RnfH from Haemophilus influenzae (strain 86-028NP).